The sequence spans 172 residues: Secretory-abundant heat soluble protein 64681 (172 aa).

A signal peptide spans 1-19; the sequence is MSRTIVALILLGLAALAAA. The segment at 30–59 is SAHS-c1; it reads EWAGKAWLGKWVSTDRSENWDAFVEALGLP. The tract at residues 74-102 is SAHS-c2; it reads WKEGDHYHHQIIIADKSYKQDIQFKLGEE. Asparagine 108 and asparagine 133 each carry an N-linked (GlcNAc...) asparagine glycan. The segment at 115–164 is SAHS-c3; the sequence is KYTEVGDNLQNEVKIPSKNKTISDSYVVKGDELEKTYKINDVVAKRWYKK.

It belongs to the Secretory-abundant heat soluble protein (SAHS) family.

Its subcellular location is the secreted. In terms of biological role, secreted heat soluble protein acting as a molecular shield in water-deficient condition. Tardigrade-specific intrinsically disordered proteins (TDPs) are essential for desiccation tolerance by forming non-crystalline amorphous solids upon desiccation, and this vitrified state mirrors their protective capabilities. This Hypsibius exemplaris (Freshwater tardigrade) protein is Secretory-abundant heat soluble protein 64681.